Consider the following 953-residue polypeptide: Eukaryotic translation initiation factor 3 subunit A (953 aa).

Residues 323-504 (LQKMASHVLL…KSISFGLDLH (182 aa)) enclose the PCI domain. 3 coiled-coil regions span residues 593–642 (QERE…KRQA), 670–704 (MNADDIIAKQVEQLDKEKRELQTKLKTQEKKVDYF), and 732–877 (ENQE…LEER). A disordered region spans residues 603–623 (IKKQKVENQEAEQKRLDEERR). Disordered stretches follow at residues 810–861 (ERKK…EIDR) and 893–953 (GWGD…ITMS). Composition is skewed to basic and acidic residues over residues 812 to 861 (KKIE…EIDR), 895 to 919 (GDHEDGGDRWRDERGGDRGPDRGGD), and 928 to 953 (WQREEPDRGGDRWRGGDRRDGMITMS).

This sequence belongs to the eIF-3 subunit A family. In terms of assembly, component of the eukaryotic translation initiation factor 3 (eIF-3) complex.

It is found in the cytoplasm. RNA-binding component of the eukaryotic translation initiation factor 3 (eIF-3) complex, which is involved in protein synthesis of a specialized repertoire of mRNAs and, together with other initiation factors, stimulates binding of mRNA and methionyl-tRNAi to the 40S ribosome. The eIF-3 complex specifically targets and initiates translation of a subset of mRNAs involved in cell proliferation. In Nematostella vectensis (Starlet sea anemone), this protein is Eukaryotic translation initiation factor 3 subunit A.